The sequence spans 390 residues: MLPGVGVFGTSLTARVIIPLLKDEGFAVKALWGRTQEEAEELAKEMSVPFYTSRIDEVLLHQDVDLVCINLPPPLTRQIAVKTLGIGKNVICDRTATPLDAFRMMSAAHYYPKLMSIMGNVLRFLPAFVRMKQLIEEGYVGELLVCEVQVHSGSLLGKKYNWSCDDLMGGGGLHSVGTYIIDLLTFLTGQKAVKVHGLLKTFVKQTDHIKGIRQITSDDFCTFQMVLEGGVCCTVTLNFNVPGEFKQDVTVVGSAGRLLAVGTDLYGQRNSAPEQELLLQDTTSVSNSLLPEKAFSDIPSPYLRGTMKMMQAVRQAFQDQDDRRTWDGRPLTMAATFDDCLYALCVVDTIKRSSQTGEWQNIAIMTEEPELSPAYLISEAMRRSRMSLYC.

Residues 1-21 (MLPGVGVFGTSLTARVIIPLL) form the signal peptide.

Belongs to the Gfo/Idh/MocA family. In terms of assembly, homodimer. Interacts with NKIRAS2.

It localises to the secreted. Functionally, probably catalytically inactive enzyme. Does not bind NAD or NADP. This Mus musculus (Mouse) protein is Glucose-fructose oxidoreductase domain-containing protein 1 (Gfod1).